We begin with the raw amino-acid sequence, 267 residues long: Probable tetrahydroxynaphthalene reductase MYCGRDRAFT_87994 (267 aa).

The NADP(+) site is built by I26, D72, N99, and R132. The Proton donor role is filled by S149. NADP(+)-binding residues include Y163, K167, I196, and T198. The active-site Proton acceptor is Y163. K167 acts as the Lowers pKa of active site Tyr in catalysis.

The protein belongs to the short-chain dehydrogenases/reductases (SDR) family. Homotetramer.

It catalyses the reaction scytalone + NADP(+) = naphthalene-1,3,6,8-tetrol + NADPH + H(+). It participates in pigment biosynthesis; melanin biosynthesis. Its function is as follows. Probable tetrahydroxynaphthalene reductase; part of the gene cluster 29 that mediates the biosynthesis dihydroxynaphthalene (DHN)-melanin, a bluish-green pigment and a structural component of the conidial wall. Catalyzes the NADPH-dependent reduction of 1,3,6,8-tetrahydroxynaphthalene (T4HN) into (+)-scytalone. This is Probable tetrahydroxynaphthalene reductase MYCGRDRAFT_87994 from Zymoseptoria tritici (strain CBS 115943 / IPO323) (Speckled leaf blotch fungus).